The following is a 287-amino-acid chain: DDRGK domain-containing protein 1 (287 aa).

Residues 1-5 (MDLIL) lie on the Lumenal side of the membrane. Residues 6–26 (LLGIAVALLVILVTLFFFTKG) traverse the membrane as a helical segment. The Cytoplasmic portion of the chain corresponds to 27–287 (KGSQESGKYN…LINLVPVSAE (261 aa)). 2 disordered regions span residues 28-102 (GSQE…KRAK) and 135-164 (KVEAEKEAEEERKREEAEKKAREEKARQEH). Low complexity predominate over residues 44–68 (AQAAPRRAQVVRNQRNRARVAAAPA). Positions 85–102 (IPHADFNGEKMGAKKRAK) are enriched in basic and acidic residues.

The protein belongs to the DDRGK1 family. As to quaternary structure, interacts with Atg9; the interaction is transient.

The protein resides in the endoplasmic reticulum membrane. In terms of biological role, substrate adapter for ufmylation, the covalent attachment of the ubiquitin-like modifier UFM1 to substrate proteins. Required for ufmylation of Atg9; protects the nervous system during aging, possibly by stabilizing Atg9 and supporting its function. The sequence is that of DDRGK domain-containing protein 1 from Culex quinquefasciatus (Southern house mosquito).